A 577-amino-acid polypeptide reads, in one-letter code: Protein O-linked-mannose beta-1,4-N-acetylglucosaminyltransferase 2 (577 aa).

Residues 1-4 (MNIA) are Cytoplasmic-facing. Residues 5-25 (AVFNALLVSVLATVLWKYIKL) traverse the membrane as a helical; Signal-anchor for type II membrane protein segment. The Lumenal portion of the chain corresponds to 26-577 (REHAFMVEEE…PFADVLLCST (552 aa)). Residues asparagine 98, asparagine 275, asparagine 335, and asparagine 540 are each glycosylated (N-linked (GlcNAc...) asparagine). The Fibronectin type-III domain maps to 481-577 (KVRDARCQAS…PFADVLLCST (97 aa)).

The protein belongs to the glycosyltransferase 61 family.

Its subcellular location is the endoplasmic reticulum membrane. It carries out the reaction 3-O-(alpha-D-mannosyl)-L-threonyl-[protein] + UDP-N-acetyl-alpha-D-glucosamine = 3-O-(N-acetyl-beta-D-glucosaminyl-(1-&gt;4)-alpha-D-mannosyl)-L-threonyl-[protein] + UDP + H(+). The protein operates within protein modification; protein glycosylation. Its function is as follows. O-linked mannose beta-1,4-N-acetylglucosaminyltransferase that transfers UDP-N-acetyl-D-glucosamine to the 4-position of the mannose to generate N-acetyl-D-glucosamine-beta-1,4-O-D-mannosylprotein. Involved in the biosynthesis of the phosphorylated O-mannosyl trisaccharide (N-acetylgalactosamine-beta-3-N-acetylglucosamine-beta-4-(phosphate-6-)mannose), a carbohydrate structure present in alpha-dystroglycan (DAG1), which is required for binding laminin G-like domain-containing extracellular proteins with high affinity. The polypeptide is Protein O-linked-mannose beta-1,4-N-acetylglucosaminyltransferase 2 (POMGNT2) (Gallus gallus (Chicken)).